The following is a 916-amino-acid chain: Probable dipeptidyl-aminopeptidase B (916 aa).

Disordered stretches follow at residues 1–35 and 67–86; these read MGRT…SGLS and DAEA…KLGS. Residues 1-92 are Cytoplasmic-facing; it reads MGRTGDLENA…KLGSGSRTRQ (92 aa). The span at 21–35 shows a compositional bias: low complexity; that stretch reads TSGTSSRSSTDSGLS. The chain crosses the membrane as a helical; Signal-anchor for type II membrane protein span at residues 93 to 113; sequence IFWALVILCLGGWVLALVLFL. At 114–916 the chain is on the vacuolar side; it reads THGRASSQTA…VKRSVPAFAH (803 aa). Residues Asn349 and Asn640 are each glycosylated (N-linked (GlcNAc...) asparagine). Ser754 serves as the catalytic Charge relay system. N-linked (GlcNAc...) asparagine glycosylation is found at Asn808 and Asn813. Active-site charge relay system residues include Asp831 and His864.

Belongs to the peptidase S9B family.

It localises to the vacuole membrane. It catalyses the reaction Release of an N-terminal dipeptide, Xaa-Yaa-|-Zaa-, from a polypeptide, preferentially when Yaa is Pro, provided Zaa is neither Pro nor hydroxyproline.. Functionally, type IV dipeptidyl-peptidase which removes N-terminal dipeptides sequentially from polypeptides having unsubstituted N-termini provided that the penultimate residue is proline. This chain is Probable dipeptidyl-aminopeptidase B (dapB), found in Aspergillus flavus (strain ATCC 200026 / FGSC A1120 / IAM 13836 / NRRL 3357 / JCM 12722 / SRRC 167).